The primary structure comprises 166 residues: Putative pre-16S rRNA nuclease (166 aa).

The protein belongs to the YqgF nuclease family.

Its subcellular location is the cytoplasm. Its function is as follows. Could be a nuclease involved in processing of the 5'-end of pre-16S rRNA. The protein is Putative pre-16S rRNA nuclease of Mesorhizobium japonicum (strain LMG 29417 / CECT 9101 / MAFF 303099) (Mesorhizobium loti (strain MAFF 303099)).